Reading from the N-terminus, the 264-residue chain is Neuferricin (264 aa).

An N-terminal signal peptide occupies residues 1–22 (MLRCGGRGLLLGLAVAAAAVMA). Residues 35–134 (FRLFIPEELS…KNYVCVGRVT (100 aa)) form the Cytochrome b5 heme-binding domain.

The protein belongs to the cytochrome b5 family. MAPR subfamily.

Its subcellular location is the secreted. In terms of biological role, heme-binding protein which promotes neuronal but not astrocyte differentiation. The chain is Neuferricin from Homo sapiens (Human).